Reading from the N-terminus, the 502-residue chain is Probable cobyric acid synthase (502 aa).

A GATase cobBQ-type domain is found at 250–448; sequence KITIGTLRLP…FHGIFHNFEF (199 aa). Cys330 acts as the Nucleophile in catalysis. His440 is an active-site residue.

Belongs to the CobB/CobQ family. CobQ subfamily.

The protein operates within cofactor biosynthesis; adenosylcobalamin biosynthesis. Catalyzes amidations at positions B, D, E, and G on adenosylcobyrinic A,C-diamide. NH(2) groups are provided by glutamine, and one molecule of ATP is hydrogenolyzed for each amidation. The sequence is that of Probable cobyric acid synthase from Methanosphaera stadtmanae (strain ATCC 43021 / DSM 3091 / JCM 11832 / MCB-3).